Reading from the N-terminus, the 151-residue chain is Protein Turandot Z (151 aa).

Positions 1–23 (MSRLIHLSFVLALLACLTGTISA) are cleaved as a signal peptide.

The protein belongs to the Turandot family.

Its subcellular location is the secreted. Functionally, a humoral factor that may play a role in stress tolerance. This is Protein Turandot Z from Drosophila persimilis (Fruit fly).